The chain runs to 130 residues: Small ribosomal subunit protein uS8z/uS8w (130 aa).

This sequence belongs to the universal ribosomal protein uS8 family.

It is found in the cytoplasm. The chain is Small ribosomal subunit protein uS8z/uS8w (RPS15AA) from Arabidopsis thaliana (Mouse-ear cress).